Here is a 220-residue protein sequence, read N- to C-terminus: Vesicle-associated protein 2-1 (220 aa).

N-acetylmethionine is present on Met-1. The Cytoplasmic segment spans residues 1 to 196 (MTGVGENQLI…RNSGNGLSLK (196 aa)). Position 2 is an N-acetylthreonine; in Vesicle-associated protein 2-1, N-terminally processed (Thr-2). Residues 9 to 129 (LISIQPDELK…TECKLKVSYI (121 aa)) enclose the MSP domain. Residues 133–154 (TTQRSSESGATNGDGQSSETIS) form a disordered region. Positions 153–188 (ISTIQRLKEERDAAVKQTQQLQHELETVRRRRNQRN) form a coiled coil. Residues 197-217 (LAAMVGLIGLIIGFILKLTLA) traverse the membrane as a helical; Anchor for type IV membrane protein segment.

The protein belongs to the VAMP-associated protein (VAP) (TC 9.B.17) family.

The protein resides in the endoplasmic reticulum membrane. May play a role in vesicle trafficking. The chain is Vesicle-associated protein 2-1 (PVA21) from Arabidopsis thaliana (Mouse-ear cress).